The following is a 218-amino-acid chain: Phosphatidylserine decarboxylase proenzyme (218 aa).

Ser182 (schiff-base intermediate with substrate; via pyruvic acid) is an active-site residue. Pyruvic acid (Ser); by autocatalysis is present on Ser182.

Belongs to the phosphatidylserine decarboxylase family. PSD-A subfamily. As to quaternary structure, heterodimer of a large membrane-associated beta subunit and a small pyruvoyl-containing alpha subunit. Pyruvate is required as a cofactor. Post-translationally, is synthesized initially as an inactive proenzyme. Formation of the active enzyme involves a self-maturation process in which the active site pyruvoyl group is generated from an internal serine residue via an autocatalytic post-translational modification. Two non-identical subunits are generated from the proenzyme in this reaction, and the pyruvate is formed at the N-terminus of the alpha chain, which is derived from the carboxyl end of the proenzyme. The post-translation cleavage follows an unusual pathway, termed non-hydrolytic serinolysis, in which the side chain hydroxyl group of the serine supplies its oxygen atom to form the C-terminus of the beta chain, while the remainder of the serine residue undergoes an oxidative deamination to produce ammonia and the pyruvoyl prosthetic group on the alpha chain.

It is found in the cell membrane. The enzyme catalyses a 1,2-diacyl-sn-glycero-3-phospho-L-serine + H(+) = a 1,2-diacyl-sn-glycero-3-phosphoethanolamine + CO2. It participates in phospholipid metabolism; phosphatidylethanolamine biosynthesis; phosphatidylethanolamine from CDP-diacylglycerol: step 2/2. Catalyzes the formation of phosphatidylethanolamine (PtdEtn) from phosphatidylserine (PtdSer). The protein is Phosphatidylserine decarboxylase proenzyme of Oleidesulfovibrio alaskensis (strain ATCC BAA-1058 / DSM 17464 / G20) (Desulfovibrio alaskensis).